Here is a 272-residue protein sequence, read N- to C-terminus: Shikimate dehydrogenase (NADP(+)) (272 aa).

Shikimate contacts are provided by residues serine 14–serine 16 and threonine 61. The active-site Proton acceptor is the lysine 65. Glutamate 77 is an NADP(+) binding site. Positions 86 and 102 each coordinate shikimate. Residues glycine 126–alanine 130, asparagine 149–arginine 154, and methionine 213 contribute to the NADP(+) site. Residue tyrosine 215 coordinates shikimate. NADP(+) is bound at residue glycine 237.

The protein belongs to the shikimate dehydrogenase family. Homodimer.

It carries out the reaction shikimate + NADP(+) = 3-dehydroshikimate + NADPH + H(+). It participates in metabolic intermediate biosynthesis; chorismate biosynthesis; chorismate from D-erythrose 4-phosphate and phosphoenolpyruvate: step 4/7. In terms of biological role, involved in the biosynthesis of the chorismate, which leads to the biosynthesis of aromatic amino acids. Catalyzes the reversible NADPH linked reduction of 3-dehydroshikimate (DHSA) to yield shikimate (SA). This Escherichia coli O127:H6 (strain E2348/69 / EPEC) protein is Shikimate dehydrogenase (NADP(+)).